The chain runs to 311 residues: Ribonuclease HIII (311 aa).

In terms of domain architecture, RNase H type-2 spans 95–311 (MSIVGSDEVG…NTEKAFRLLK (217 aa)). 3 residues coordinate a divalent metal cation: Asp101, Glu102, and Asp206.

Belongs to the RNase HII family. RnhC subfamily. Mn(2+) serves as cofactor. Requires Mg(2+) as cofactor.

The protein localises to the cytoplasm. The catalysed reaction is Endonucleolytic cleavage to 5'-phosphomonoester.. In terms of biological role, endonuclease that specifically degrades the RNA of RNA-DNA hybrids. The chain is Ribonuclease HIII from Bacillus cereus (strain ATCC 10987 / NRS 248).